A 217-amino-acid polypeptide reads, in one-letter code: PRA1 family protein B3 (217 aa).

A disordered region spans residues 1-24; it reads MMANPPTLPISDHSGGGSQSQQPV. 5 consecutive transmembrane segments (helical) span residues 76 to 96, 98 to 118, 138 to 158, 162 to 182, and 193 to 213; these read LPYF…LSLL, HPFS…LYLF, LGVL…GSLL, LMIG…EDLF, and LLSF…STPA.

Belongs to the PRA1 family. As to quaternary structure, interacts with PRA1B1, PRA1B2, PRA1B4, PRA1B5, PRA1B6 and PRA1E. In terms of tissue distribution, expressed in hypocotyls and shoot apex.

The protein localises to the endosome membrane. Functionally, may be involved in both secretory and endocytic intracellular trafficking in the endosomal/prevacuolar compartments. This chain is PRA1 family protein B3 (PRA1B3), found in Arabidopsis thaliana (Mouse-ear cress).